A 775-amino-acid polypeptide reads, in one-letter code: Outer capsid protein VP4 (775 aa).

The interval 65–223 is spike head; sequence LDGPYQPTTF…KCNEYINNGL (159 aa). The tract at residues 247-478 is spike body and stalk (antigen domain); it reads AQVNEDITIS…LISLVPTNDD (232 aa). The DGE motif; interaction with ITGA2/ITGB1 heterodimer signature appears at 307–309; it reads DGE. A disulfide bridge connects residues Cys-317 and Cys-379. A hydrophobic; possible role in virus entry into host cell region spans residues 388-408; it reads LPVGAWPVMNGGAVSLHFAGV. Positions 447 to 449 match the YGL motif; interaction with ITGA4 motif; sequence YGL. Positions 483 to 510 form a coiled coil; sequence IMNSVTVRQDLERQLTDLREEFNSLSQE. A spike foot region spans residues 509-775; that stretch reads QEIAMSQLID…IEQLILQCKL (267 aa). The KID motif; interaction with HSPA8 signature appears at 643 to 645; that stretch reads KID.

This sequence belongs to the rotavirus VP4 family. Homotrimer. VP4 adopts a dimeric appearance above the capsid surface, while forming a trimeric base anchored inside the capsid layer. Only hints of the third molecule are observed above the capsid surface. It probably performs a series of molecular rearrangements during viral entry. Prior to trypsin cleavage, it is flexible. The priming trypsin cleavage triggers its rearrangement into rigid spikes with approximate two-fold symmetry of their protruding parts. After an unknown second triggering event, cleaved VP4 may undergo another rearrangement, in which two VP5* subunits fold back on themselves and join a third subunit to form a tightly associated trimer, shaped like a folded umbrella. Interacts with VP6. Interacts with VP7. In terms of assembly, homotrimer. The trimer is coiled-coil stabilized by its C-terminus, however, its N-terminus, known as antigen domain or 'body', seems to be flexible allowing it to self-associate either as a dimer or a trimer. Post-translationally, proteolytic cleavage by trypsin results in activation of VP4 functions and greatly increases infectivity. The penetration into the host cell is dependent on trypsin treatment of VP4. It produces two peptides, VP5* and VP8* that remain associated with the virion. Cleavage of VP4 by trypsin probably occurs in vivo in the lumen of the intestine prior to infection of enterocytes. Trypsin seems to be incorporated into the three-layered viral particles but remains inactive as long as the viral outer capsid is intact and would only be activated upon the solubilization of the latter.

The protein resides in the virion. It is found in the host rough endoplasmic reticulum. Its subcellular location is the host cell membrane. The protein localises to the host cytoplasm. It localises to the host cytoskeleton. The protein resides in the host endoplasmic reticulum-Golgi intermediate compartment. Spike-forming protein that mediates virion attachment to the host epithelial cell receptors and plays a major role in cell penetration, determination of host range restriction and virulence. Rotavirus attachment and entry into the host cell probably involves multiple sequential contacts between the outer capsid proteins VP4 and VP7, and the cell receptors. It is subsequently lost, together with VP7, following virus entry into the host cell. Following entry into the host cell, low intracellular or intravesicular Ca(2+) concentration probably causes the calcium-stabilized VP7 trimers to dissociate from the virion. This step is probably necessary for the membrane-disrupting entry step and the release of VP4, which is locked onto the virion by VP7. During the virus exit from the host cell, VP4 seems to be required to target the newly formed virions to the host cell lipid rafts. In terms of biological role, forms the spike 'foot' and 'body' and acts as a membrane permeabilization protein that mediates release of viral particles from endosomal compartments into the cytoplasm. During entry, the part of VP5* that protrudes from the virus folds back on itself and reorganizes from a local dimer to a trimer. This reorganization may be linked to membrane penetration by exposing VP5* hydrophobic region. In integrin-dependent strains, VP5* targets the integrin heterodimer ITGA2/ITGB1 for cell attachment. Functionally, forms the head of the spikes and mediates the recognition of specific host cell surface glycans. It is the viral hemagglutinin and an important target of neutralizing antibodies. In sialic acid-dependent strains, VP8* binds to host cell sialic acid, most probably a ganglioside, providing the initial contact. In some other strains, VP8* mediates the attachment to histo-blood group antigens (HBGAs) for viral entry. The polypeptide is Outer capsid protein VP4 (Homo sapiens (Human)).